The chain runs to 598 residues: Auxin response factor 22 (598 aa).

The TF-B3 DNA-binding region spans 124-226; it reads NSFTKVLTAS…ELRVGIRRAG (103 aa). A PB1 domain is found at 509–590; sequence RTCTKVQMQG…MVKKILIFKR (82 aa).

The protein belongs to the ARF family. Homodimers and heterodimers.

It localises to the nucleus. Functionally, auxin response factors (ARFs) are transcriptional factors that bind specifically to the DNA sequence 5'-TGTCTC-3' found in the auxin-responsive promoter elements (AuxREs). Could act as transcriptional activator or repressor. Formation of heterodimers with Aux/IAA proteins may alter their ability to modulate early auxin response genes expression. This is Auxin response factor 22 (ARF22) from Arabidopsis thaliana (Mouse-ear cress).